The sequence spans 297 residues: B-lymphocyte antigen CD20 (297 aa).

The Cytoplasmic portion of the chain corresponds to 1–51 (MTTPRNSMSGTLPVDPMKSPTAMYPVQKIIPKRMPSVVGPTQNFFMRESKT). The residue at position 36 (S36) is a Phosphoserine. The chain crosses the membrane as a helical span at residues 52–72 (LGAVQIMNGLFHIALGSLLMI). The Extracellular portion of the chain corresponds to 73–75 (HTD). The helical transmembrane segment at 76–96 (VCAPICITMWYPLWGGIMFII) threads the bilayer. At 97–122 (SGSLLAAADKNPRKSLVKGKMIMNSL) the chain is on the cytoplasmic side. A helical membrane pass occupies residues 123-143 (SLFAAISGIIFLIMDIFNITI). The Extracellular segment spans residues 144 to 188 (SHFFKMENLNLIKAPMPYVDIHNCDPANPSEKNSLSIQYCGSIRS). Residues 189 to 209 (VFLGVFAVMLIFAFFQKLVTA) form a helical membrane-spanning segment. Topologically, residues 210-297 (GIVENEWKKL…SSPIENDSIP (88 aa)) are cytoplasmic. A lipid anchor (S-palmitoyl cysteine) is attached at C220. Position 225 is a phosphoserine (S225). The disordered stretch occupies residues 274 to 297 (ELEINFAEPPQEQESSPIENDSIP). Positions 281–290 (EPPQEQESSP) are enriched in low complexity.

It belongs to the MS4A family. Forms homotetramers. Interacts with the heavy and light chains of cell surface IgM, the antigen-binding components of the BCR. Phosphorylated. Might be functionally regulated by protein kinase(s). In terms of tissue distribution, expressed in PBMCs and lymph node from healthy dogs, in B-cells of canine lymphoma, but not in T-cell lymphoma cells and non-T and non-B-cell lymphoma cells.

It localises to the cell membrane. B-lymphocyte-specific membrane protein that plays a role in the regulation of cellular calcium influx necessary for the development, differentiation, and activation of B-lymphocytes. Functions as a store-operated calcium (SOC) channel component promoting calcium influx after activation by the B-cell receptor/BCR. This chain is B-lymphocyte antigen CD20 (MS4A1), found in Canis lupus familiaris (Dog).